We begin with the raw amino-acid sequence, 902 residues long: MGAASCEDEELEFKLVFGEEKEAPPLGAGGLGEELDSEDAPPCCRLALGEPPPYGAAPIGIPRPPPPRPGMHSPPPRPAPSPGTWESQPARSVRLGGPGGGAGGAGGGRVLECPSIRITSISPTPEPPAALEDNPDAWGDGSPRDYPPPEGFGGYREAGGQGGGAFFSPSPGSSSLSSWSFFSDASDEAALYAACDEVESELNEAASRFGLGSPLPSPRASPRPWTPEDPWSLYGPSPGGRGPEDSWLLLSAPGPTPASPRPASPCGKRRYSSSGTPSSASPALSRRGSLGEEGSEPPPPPPLPLARDPGSPGPFDYVGAPPAESIPQKTRRTSSEQAVALPRSEEPASCNGKLPLGAEESVAPPGGSRKEVAGMDYLAVPSPLAWSKARIGGHSPIFRTSALPPLDWPLPSQYEQLELRIEVQPRAHHRAHYETEGSRGAVKAAPGGHPVVKLLGYSEKPLTLQMFIGTADERNLRPHAFYQVHRITGKMVATASYEAVVSGTKVLEMTLLPENNMAANIDCAGILKLRNSDIELRKGETDIGRKNTRVRLVFRVHVPQGGGKVVSVQAASVPIECSQRSAQELPQVEAYSPSACSVRGGEELVLTGSNFLPDSKVVFIERGPDGKLQWEEEATVNRLQSNEVTLTLTVPEYSNKRVSRPVQVYFYVSNGRRKRSPTQSFRFLPVICKEEPLPDSSLRGFPSASATPFGTDMDFSPPRPPYPSYPHEDPACETPYLSEGFGYGMPPLYPQTGPPPSYRPGLRMFPETRGTTGCAQPPAVSFLPRPFPSDPYGGRGSSFSLGLPFSPPAPFRPPPLPASPPLEGPFPSQSDVHPLPAEGYNKVGPGYGPGEGAPEQEKSRGGYSSGFRDSVPIQGITLEEVSEIIGRDLSGFPAPPGEEPPA.

Disordered stretches follow at residues 16–180 (VFGE…SSWS) and 208–369 (RFGL…GGSR). The segment covering 50-81 (EPPPYGAAPIGIPRPPPPRPGMHSPPPRPAPS) has biased composition (pro residues). A compositionally biased stretch (gly residues) spans 96 to 109 (GGPGGGAGGAGGGR). Positions 114–119 (PSIRIT) are calcineurin-binding. Over residues 151 to 165 (GFGGYREAGGQGGGA) the composition is skewed to gly residues. Positions 166–180 (FFSPSPGSSSLSSWS) are enriched in low complexity. S168 and S170 each carry phosphoserine; by MAPK7 and MAPK14. Phosphoserine; by MAPK8 and MAPK9 is present on residues S213 and S217. The SP 1 repeat unit spans residues 213-229 (SPLPSPRASPRPWTPED). The segment at 213–293 (SPLPSPRASP…LSRRGSLGEE (81 aa)) is 2 approximate SP repeats. 2 stretches are compositionally biased toward pro residues: residues 215–227 (LPSP…PWTP) and 254–263 (GPTPASPRPA). A Nuclear localization signal motif is present at residues 268 to 270 (KRR). Over residues 272 to 288 (SSSGTPSSASPALSRRG) the composition is skewed to low complexity. An SP 2; approximate repeat occupies 277 to 293 (PSSASPALSRRGSLGEE). A phosphoserine; by RPS6KA3 mark is found at S289 and S344. The RHD domain maps to 401–582 (SALPPLDWPL…VPIECSQRSA (182 aa)). The DNA-binding element occupies 430 to 437 (RAHYETEG). In terms of domain architecture, IPT/TIG spans 586-683 (PQVEAYSPSA…KRSPTQSFRF (98 aa)). The Nuclear localization signal motif lies at 672 to 674 (RRK). Residue K689 forms a Glycyl lysine isopeptide (Lys-Gly) (interchain with G-Cter in SUMO2) linkage. A disordered region spans residues 791-870 (PYGGRGSSFS…GGYSSGFRDS (80 aa)). A compositionally biased stretch (pro residues) spans 805–824 (FSPPAPFRPPPLPASPPLEG).

As to quaternary structure, member of the multicomponent NFATC transcription complex that consists of at least two components, a pre-existing cytoplasmic component NFATC2 and an inducible nuclear component NFATC1. Other NFAT proteins, such as NFATC3, or members of the activating protein-1 (AP-1) family and MAF can also bind the complex. NFAT proteins can bind DNA as monomers or dimers. Component of a promoter-binding complex composed of STAT3, NFATC3 and NFATC4; complex formation is enhanced by calcineurin. Interacts with CREBBP; this interaction potentiates transcription activation. Interacts with MAPK8/JNK1 and MAPK9/JNK2. Interacts with GATA4 (via the second Zn finger). Interacts (via N-terminus) with IRAK1 (via C-terminus). Interacts with RPS6KA3. Interacts with HOMER1, HOMER2 and HOMER3; this interaction competes with calcineurin/PPP3CA-binding and hence prevents NFATC4 dephosphorylation and activation. Interacts with ESR1 and ESR2; this interaction decreases NFATC4 transcriptional activity. Interacts with MTOR and MAPK7/ERK5. Interacts with TRIM17; this interaction prevents NFATC3 nuclear localization. Interacts with TCF25 (via C-terminus); the interaction leads to suppression of NFATC4 transcription factor activity and is reduced following stimulation with angiotensin-2. Phosphorylated by NFATC-kinases; dephosphorylated by calcineurin/PPP3CA. Phosphorylated on Ser-168 and Ser-170 by MTOR, IRAK1, MAPK7/ERK5 and MAPK14/p38, on Ser-213 and Ser-217 by MAPK8/JNK1 and MAPK9/JNK2, and on Ser-289 and Ser-344 by RPS6KA3. Phosphorylated by GSK3B. Phosphorylation by GSK3B markedly increases NFATC4 ubiquitination. Phosphorylation at Ser-168 and Ser-170 is stimulated by UV irradiation. Phosphorylation determines subcellular location: the hyperphosphorylated protein is cytosolic, while the dephosphorylated form is targeted to the nucleus. Post-translationally, ubiquitinated, leading to degradation by the proteasome. Ubiquitination may be stimulated by GSK3B-dependent phosphorylation. Polyubiquitin linkage mainly occurs through 'Lys-48'. In terms of tissue distribution, widely expressed, with high levels in placenta, lung, kidney, testis and ovary. Weakly expressed in spleen and thymus. In the hippocampus, expressed in the granular layer of the dentate gyrus, in the pyramidal neurons of CA3 region, and in the hippocampal fissure. Expressed in the heart (at protein level).

The protein resides in the cytoplasm. Its subcellular location is the nucleus. Its activity is regulated as follows. Transcriptional activity may be repressed by ESR1 and ESR2. Ca(2+)-regulated transcription factor that is involved in several processes, including the development and function of the immune, cardiovascular, musculoskeletal, and nervous systems. Involved in T-cell activation, stimulating the transcription of cytokine genes, including that of IL2 and IL4. Along with NFATC3, involved in embryonic heart development. Following JAK/STAT signaling activation and as part of a complex with NFATC3 and STAT3, binds to the alpha-beta E4 promoter region of CRYAB and activates transcription in cardiomyocytes. Involved in mitochondrial energy metabolism required for cardiac morphogenesis and function. Transactivates many genes involved in the cardiovascular system, including AGTR2, NPPB/BNP (in synergy with GATA4), NPPA/ANP/ANF and MYH7/beta-MHC. Involved in the regulation of adult hippocampal neurogenesis. Involved in BDNF-driven pro-survival signaling in hippocampal adult-born neurons. Involved in the formation of long-term spatial memory and long-term potentiation. In cochlear nucleus neurons, may play a role in deafferentation-induced apoptosis during the developmental critical period, when auditory neurons depend on afferent input for survival. Binds to and activates the BACE1/Beta-secretase 1 promoter, hence may regulate the proteolytic processing of the amyloid precursor protein (APP). Plays a role in adipocyte differentiation. May be involved in myoblast differentiation into myotubes. Binds the consensus DNA sequence 5'-GGAAAAT-3'. In the presence of CREBBP, activates TNF transcription. Binds to PPARG gene promoter and regulates its activity. Binds to PPARG and REG3G gene promoters. The protein is Nuclear factor of activated T-cells, cytoplasmic 4 (NFATC4) of Homo sapiens (Human).